Consider the following 1072-residue polypeptide: RIMS-binding protein 2 (1072 aa).

In terms of domain architecture, SH3 1 spans 181-248 (GKVHLCVARY…PSNFVDFIQD (68 aa)). Fibronectin type-III domains are found at residues 311–404 (VPYP…GKDV), 407–489 (APSQ…KKEA), and 503–604 (PPQD…VPPA). Disordered regions lie at residues 597–681 (PDLL…APVS) and 713–800 (SAGQ…TSHN). Over residues 599 to 615 (LLVPPAPHPRTAPPPKP) the composition is skewed to pro residues. A compositionally biased stretch (basic and acidic residues) spans 620–635 (MDTKDQHLGPHVKVDE). Low complexity predominate over residues 660-670 (GPGRRSPSPSR). Residues serine 720 and serine 728 each carry the phosphoserine modification. Basic and acidic residues-rich tracts occupy residues 730–743 (EVKRRGTSVDDFLK) and 754–765 (CHGDEYHTESSR). The span at 771 to 781 (DIMEEDEEELY) shows a compositional bias: acidic residues. Phosphoserine is present on residues serine 852 and serine 859. The residue at position 861 (threonine 861) is a Phosphothreonine. 2 SH3 domains span residues 868–936 (LPAR…EIHA) and 972–1039 (VPTR…EVPD). A disordered region spans residues 1044-1072 (HLSDAPPHYSHDPPMRSKAKRKKSVHFTP). Basic residues predominate over residues 1060-1072 (SKAKRKKSVHFTP).

This sequence belongs to the RIMBP family. Interacts with RIMS1, RIMS2, CACNA1D and CACNA1B, and potentially with other Ca(2+) channel alpha-1 isoforms.

It is found in the cell membrane. The protein localises to the synapse. In terms of biological role, plays a role in the synaptic transmission as bifunctional linker that interacts simultaneously with RIMS1, RIMS2, CACNA1D and CACNA1B. The protein is RIMS-binding protein 2 (Rimbp2) of Mus musculus (Mouse).